The following is a 143-amino-acid chain: Agaricus bisporus lectin (143 aa).

Positions 29, 48, 49, and 73 each coordinate beta-D-Gal-(1-&gt;3)-alpha-D-GalNAc. N-acetyl-beta-D-glucosamine-binding residues include T82, R103, and Y114.

It belongs to the fungal fruit body lectin family. As to quaternary structure, homotetramer.

Lectin that recognizes O-linked galactose-beta-1,3-N-acetylgalactosamine, a disaccharide (Thomsen-Friedenreich antigen or T-disaccharide), present on cell surface glycoproteins. Can also bind galactose-beta-1,3-N-acetylglucosamine. Does not bind monosaccharides. Can be internalized by clathrin-coated vesicles after binding to surface glycoproteins. After internalization it inhibits nuclear import of nuclear localization signal dependent proteins. Inhibits proliferation of malignant cells without cytotoxicity for normal cells. The sequence is that of Agaricus bisporus lectin from Agaricus bisporus (White button mushroom).